The sequence spans 862 residues: Ecdysone-induced protein 78C (862 aa).

Disordered regions lie at residues 28–83 (SSEQ…EEAL), 97–138 (LHFF…KQHH), 173–210 (ASLSPQQQQQRQHTHQQQQQQQQQQQHPGQQQHQLNCT), and 230–353 (ASNH…NNNN). Over residues 37 to 46 (KQEDLIKDFT) the composition is skewed to basic and acidic residues. Residues 47-82 (RDEEEQPSEEEAEEEDNEEDEEEEGEEEEEDEDEEA) are compositionally biased toward acidic residues. Positions 105–119 (DSSTQGAYSEANSLE) are enriched in polar residues. Composition is skewed to low complexity over residues 173–206 (ASLSPQQQQQRQHTHQQQQQQQQQQQHPGQQQHQ), 230–291 (ASNH…NNSV), 308–335 (QQQQPLPTTQLQQQQQHQQQLQHPQQQQ), and 342–353 (SSSSNGSSNNNN). Residues 360–435 (FVPCKVCGDK…AGMSRDSVRY (76 aa)) constitute a DNA-binding region (nuclear receptor). NR C4-type zinc fingers lie at residues 363–383 (CKVCGDKASGYHYGVTSCEGC) and 399–418 (CLRDGKCLVIRLNRNRCQYC). A disordered region spans residues 444–557 (ELNGAAASSA…NNNSSSGNAS (114 aa)). Low complexity predominate over residues 447 to 460 (GAAASSAAAGAPAS). The segment covering 463–472 (VDDSTSSTLH) has biased composition (polar residues). A compositionally biased stretch (low complexity) spans 475–508 (HLQQQQQQHLLQQQQQQQHQPQLQQHHQLQQQPH). Positions 516-533 (TPSTPQTPQMCSIASSPS) are enriched in polar residues. Positions 539-555 (NSANNNNNNNNNSSSGN) are enriched in low complexity. The 230-residue stretch at 626-855 (YTEELTRELM…PPLFAEIFDI (230 aa)) folds into the NR LBD domain.

The protein belongs to the nuclear hormone receptor family. NR1 subfamily.

The protein localises to the nucleus. In terms of biological role, induces the early late puff 78C which triggers puparium formation and development. The polypeptide is Ecdysone-induced protein 78C (Eip78C) (Drosophila melanogaster (Fruit fly)).